The following is a 268-amino-acid chain: L-cystine-binding protein TcyA (268 aa).

Residues 1–19 (MKKALLALFMVVSIAALAA) form the signal peptide. A lipid anchor (N-palmitoyl cysteine) is attached at Cys-20. Residue Cys-20 is the site of S-diacylglycerol cysteine attachment.

The protein belongs to the bacterial solute-binding protein 3 family. In terms of assembly, the complex is composed of two ATP-binding proteins (TcyC), two transmembrane proteins (TcyB) and a solute-binding protein (TcyA).

Its subcellular location is the cell membrane. Functionally, part of the ABC transporter complex TcyABC involved in L-cystine import. In Bacillus subtilis (strain 168), this protein is L-cystine-binding protein TcyA (tcyA).